Reading from the N-terminus, the 445-residue chain is MLCYVTRPDAVLMEVEVEAKANGEDCLNQVCRRLGIIEVDYFGLQFTGSKGESLWLNLRNRISQQMDGLAPYRLKLRVKFFVEPHLILQEQTRHIFFLHIKESLLAGHLQCSPEQAVELSALLAQTKFGDYNQNTAQYSYEDLCEKELSSSTLNSIVGKHKELEGISQASAEYQVLQIVSAMENYGIEWHAVRDSEGQKLLIGVGPEGISICKEDFSPINRIAYPVVQMATQSGKNVYLTVTKESGNSIVLLFKMISTRAASGLYRAITETHAFYRCDTVTSAVMMQYSRDLKGHLASLFLNENINLGKKYVFDIKRTSKEVYDHARRALYNAGVVDLVSRNDQSPPSSPLKSSDSSMSCSSCEGLSCQQTRVLQEKLRKLKEAMLCMVCCEEEINSTFCPCGHTVCCESCAAQLQSCPVCRSRVEHVQHVYLPTHTSLLNLTVI.

Residues 1–279 (MLCYVTRPDA…ETHAFYRCDT (279 aa)) form the FERM domain. The tract at residues 341–363 (RNDQSPPSSPLKSSDSSMSCSSC) is disordered. Residues 350-363 (PLKSSDSSMSCSSC) show a composition bias toward low complexity. Positions 360, 363, and 368 each coordinate Fe cation. An RING-type zinc finger spans residues 387–422 (CMVCCEEEINSTFCPCGHTVCCESCAAQLQSCPVCR). The tract at residues 431–433 (VYL) is critical for homodimerization.

In terms of assembly, homodimer. Interacts with the E2 ubiquitin-conjugating enzyme, UBE2D1 (via RING-type zinc finger). Interacts with myosin regulatory light chain (MRLC) and TMEM4. Post-translationally, autoubiquitinated. Expressed in developing and adult brain, hippocampus, cerebellum, cerebral cortex, thalamus and substantia nigra. Predominantly found in neurons.

The protein resides in the cytoplasm. Its subcellular location is the cell membrane. It catalyses the reaction S-ubiquitinyl-[E2 ubiquitin-conjugating enzyme]-L-cysteine + [acceptor protein]-L-lysine = [E2 ubiquitin-conjugating enzyme]-L-cysteine + N(6)-ubiquitinyl-[acceptor protein]-L-lysine.. It participates in protein modification; protein ubiquitination. Can bind 1 iron ion per dimer. Iron binding seems to decrease LDLR degradation activity. Functionally, E3 ubiquitin-protein ligase that mediates ubiquitination and subsequent proteasomal degradation of myosin regulatory light chain (MRLC), LDLR, VLDLR and LRP8. Activity depends on E2 enzymes of the UBE2D family. Proteasomal degradation of MRLC leads to inhibit neurite outgrowth in presence of NGF by counteracting the stabilization of MRLC by saposin-like protein (CNPY2/MSAP) and reducing CNPY2-stimulated neurite outgrowth. Acts as a sterol-dependent inhibitor of cellular cholesterol uptake by mediating ubiquitination and subsequent degradation of LDLR. This is E3 ubiquitin-protein ligase MYLIP (Mylip) from Rattus norvegicus (Rat).